The following is a 310-amino-acid chain: Ribosomal protein uL3 glutamine methyltransferase (310 aa).

This sequence belongs to the protein N5-glutamine methyltransferase family. PrmB subfamily.

It catalyses the reaction L-glutaminyl-[ribosomal protein uL3] + S-adenosyl-L-methionine = N(5)-methyl-L-glutaminyl-[ribosomal protein uL3] + S-adenosyl-L-homocysteine + H(+). In terms of biological role, methylates large ribosomal subunit protein uL3 on a specific glutamine residue. This is Ribosomal protein uL3 glutamine methyltransferase from Vibrio anguillarum (strain ATCC 68554 / 775) (Listonella anguillarum).